The chain runs to 152 residues: Transcriptional regulator MraZ (152 aa).

2 consecutive SpoVT-AbrB domains span residues 5 to 52 (ATQI…TLSE) and 81 to 124 (ASEC…DEQA).

The protein belongs to the MraZ family. In terms of assembly, forms oligomers.

The protein localises to the cytoplasm. It localises to the nucleoid. Functionally, negatively regulates its own expression and that of the subsequent genes in the proximal part of the division and cell wall (dcw) gene cluster. Acts by binding directly to DNA. May also regulate the expression of genes outside the dcw cluster. This is Transcriptional regulator MraZ from Photorhabdus laumondii subsp. laumondii (strain DSM 15139 / CIP 105565 / TT01) (Photorhabdus luminescens subsp. laumondii).